The sequence spans 161 residues: Probable chemoreceptor glutamine deamidase CheD (161 aa).

The protein belongs to the CheD family.

The catalysed reaction is L-glutaminyl-[protein] + H2O = L-glutamyl-[protein] + NH4(+). In terms of biological role, probably deamidates glutamine residues to glutamate on methyl-accepting chemotaxis receptors (MCPs), playing an important role in chemotaxis. This chain is Probable chemoreceptor glutamine deamidase CheD, found in Trichlorobacter lovleyi (strain ATCC BAA-1151 / DSM 17278 / SZ) (Geobacter lovleyi).